Reading from the N-terminus, the 224-residue chain is Thymidine kinase, cytosolic (224 aa).

The residue at position 13 (Ser13) is a Phosphoserine. ATP-binding positions include 26–33 (GPMFSGKS), 58–60 (DTR), and 98–101 (DEGQ). The Proton acceptor role is filled by Glu99. Substrate is bound at residue Phe129. Zn(2+)-binding residues include Cys154 and Cys157. Substrate-binding positions include 173 to 177 (VEVIG) and Tyr182. The Zn(2+) site is built by Cys186 and Cys189. Positions 203-205 (KEN) match the KEN box motif.

The protein belongs to the thymidine kinase family. As to quaternary structure, homotetramer. Tetramerization from dimerization is induced by ATP and increases catalytic efficiency due to a high affinity for thymidine. Tetramerization is inhibited by phosphorylation at Ser-13. Interacts (via the KEN box) with FZR1. Post-translationally, phosphorylated on Ser-13 in mitosis. Phosphorylation of Ser-13 by CDK1 during mitosis reduces homotetramerization and catalytic efficiency when DNA replication is complete and intracellular TK1 is still present at a high level. In terms of processing, polyubiquitinated. Postmitosis, ubiquitination leads to proteasomal degradation. The KEN box sequence located at the C-terminal region targets for degradation by the anaphase promoting complex (APC/C) activated and rate-limited by FZR1.

It localises to the cytoplasm. The enzyme catalyses thymidine + ATP = dTMP + ADP + H(+). Its function is as follows. Cell-cycle-regulated enzyme of importance in nucleotide metabolism. Catalyzes the first enzymatic step in the salvage pathway converting thymidine into thymidine monophosphate. Transcriptional regulation limits expression to the S phase of the cell cycle and transient expression coincides with the oscillation in the intracellular dTTP concentration. The sequence is that of Thymidine kinase, cytosolic (TK1) from Gallus gallus (Chicken).